We begin with the raw amino-acid sequence, 259 residues long: UPF0246 protein PputW619_0896 (259 aa).

This sequence belongs to the UPF0246 family.

This chain is UPF0246 protein PputW619_0896, found in Pseudomonas putida (strain W619).